A 64-amino-acid chain; its full sequence is Large ribosomal subunit protein bL35 (64 aa).

The span at 1–45 shows a compositional bias: basic residues; sequence MPKMKTHKGAAKRFKKTGKGKIKRRKAFKSHILTKKTPKRKRNLR. A disordered region spans residues 1-64; that stretch reads MPKMKTHKGA…EEKRIKRLLP (64 aa).

This sequence belongs to the bacterial ribosomal protein bL35 family.

This Natranaerobius thermophilus (strain ATCC BAA-1301 / DSM 18059 / JW/NM-WN-LF) protein is Large ribosomal subunit protein bL35.